We begin with the raw amino-acid sequence, 388 residues long: Succinate--CoA ligase [ADP-forming] subunit beta (388 aa).

The 236-residue stretch at 9-244 (KEIFRSMGVA…LEEEDPKEIE (236 aa)) folds into the ATP-grasp domain. ATP-binding positions include lysine 46, 53 to 55 (GRG), glutamate 99, cysteine 102, and glutamate 107. 2 residues coordinate Mg(2+): asparagine 199 and aspartate 213. Residues asparagine 264 and 321–323 (GIM) contribute to the substrate site.

Belongs to the succinate/malate CoA ligase beta subunit family. In terms of assembly, heterotetramer of two alpha and two beta subunits. It depends on Mg(2+) as a cofactor.

It catalyses the reaction succinate + ATP + CoA = succinyl-CoA + ADP + phosphate. The enzyme catalyses GTP + succinate + CoA = succinyl-CoA + GDP + phosphate. It functions in the pathway carbohydrate metabolism; tricarboxylic acid cycle; succinate from succinyl-CoA (ligase route): step 1/1. Succinyl-CoA synthetase functions in the citric acid cycle (TCA), coupling the hydrolysis of succinyl-CoA to the synthesis of either ATP or GTP and thus represents the only step of substrate-level phosphorylation in the TCA. The beta subunit provides nucleotide specificity of the enzyme and binds the substrate succinate, while the binding sites for coenzyme A and phosphate are found in the alpha subunit. This Staphylococcus epidermidis (strain ATCC 35984 / DSM 28319 / BCRC 17069 / CCUG 31568 / BM 3577 / RP62A) protein is Succinate--CoA ligase [ADP-forming] subunit beta.